Consider the following 85-residue polypeptide: Small ribosomal subunit protein bS18c (85 aa).

It belongs to the bacterial ribosomal protein bS18 family. As to quaternary structure, part of the 30S ribosomal subunit.

Its subcellular location is the plastid. The protein resides in the chloroplast. The protein is Small ribosomal subunit protein bS18c of Tupiella akineta (Green alga).